The primary structure comprises 726 residues: MSKRKSPHDFLFREELGHGSYSTVYRVVERSSQHQYAIKICSKRHIIGENKVKYVTIEKNTLNLLGQANHPGIIKLYYTFHDQENLYFVMDLAPGGELLQLLRRQRVFSEAWARHYMCQLVDTVEYIHSMGVIHRDLKPENVLLDKEGRLMIADFGAAYTVGQSDAGSDGDKPATSFVGTAEYVSPELLLENKSYYSSDVWALGCMLYQFLQGTPPFRGQNEMETFEQIVNLDYTWRIPANPLAAGLVSKILVLDPSQRYTLEQIKKHKWFSGVDWNNKEKIWRGSWTIASESTPRPRVGYKSRELLDTPIKNIPVVTQRNKKPTKMNTTSSIVEWRKMLGLSGNDLGIKATLGGNGLPIAPFTPTSGITPDNRGDNAVAPAKTRDAFRPMSSRVISSPHSKPSGRPAALPLPLQTGTPSHNVVQQIVVNTPGRTETSSPYVSPTVPVRNAIWKQDWVQLHEIPYSAKYSGLTLAGFSQVSDTLIADLISHHANELRTLSRTGILSLDNTGYLSFIEQGRARPLSRIIDPDLSIYEYQLGHSTEDDFLILEKYKQSIWIVWPNKPTSASRRIPIKETWAQTLSKYKKQVSDEEELSAKLNRTCVSSWGSRTPSPTYPAEGKTRVAVQPQDIPLPSPAKSSSNSGVSEPISKIPPRQLVSASEQSHKAKSEAHTKKANSYSYIAPNDMVLSSSRYEVLRTASNNDSKSNGAAVSGASAAFRTLRVNK.

One can recognise a Protein kinase domain in the interval 10-271 (FLFREELGHG…LEQIKKHKWF (262 aa)). ATP-binding positions include 16 to 24 (LGHGSYSTV) and K39. D136 serves as the catalytic Proton acceptor. The segment at 629 to 679 (QDIPLPSPAKSSSNSGVSEPISKIPPRQLVSASEQSHKAKSEAHTKKANSY) is disordered. A compositionally biased stretch (basic and acidic residues) spans 663-673 (QSHKAKSEAHT).

This sequence belongs to the protein kinase superfamily. Ser/Thr protein kinase family.

The catalysed reaction is L-seryl-[protein] + ATP = O-phospho-L-seryl-[protein] + ADP + H(+). It carries out the reaction L-threonyl-[protein] + ATP = O-phospho-L-threonyl-[protein] + ADP + H(+). Serine/threonine-protein kinase. This Eremothecium gossypii (strain ATCC 10895 / CBS 109.51 / FGSC 9923 / NRRL Y-1056) (Yeast) protein is Serine/threonine-protein kinase PKH3 (PKH3).